The following is a 622-amino-acid chain: Chaperone protein HscA homolog (622 aa).

Belongs to the heat shock protein 70 family.

Chaperone involved in the maturation of iron-sulfur cluster-containing proteins. Has a low intrinsic ATPase activity which is markedly stimulated by HscB. The chain is Chaperone protein HscA homolog from Burkholderia orbicola (strain MC0-3).